A 348-amino-acid chain; its full sequence is RNA 3'-terminal phosphate cyclase (348 aa).

ATP-binding positions include Q101 and 286–289; that span reads HMAD. H312 serves as the catalytic Tele-AMP-histidine intermediate.

The protein belongs to the RNA 3'-terminal cyclase family. Type 1 subfamily.

Its subcellular location is the cytoplasm. The enzyme catalyses a 3'-end 3'-phospho-ribonucleotide-RNA + ATP = a 3'-end 2',3'-cyclophospho-ribonucleotide-RNA + AMP + diphosphate. Functionally, catalyzes the conversion of 3'-phosphate to a 2',3'-cyclic phosphodiester at the end of RNA. The mechanism of action of the enzyme occurs in 3 steps: (A) adenylation of the enzyme by ATP; (B) transfer of adenylate to an RNA-N3'P to produce RNA-N3'PP5'A; (C) and attack of the adjacent 2'-hydroxyl on the 3'-phosphorus in the diester linkage to produce the cyclic end product. The biological role of this enzyme is unknown but it is likely to function in some aspects of cellular RNA processing. The polypeptide is RNA 3'-terminal phosphate cyclase (Pyrobaculum aerophilum (strain ATCC 51768 / DSM 7523 / JCM 9630 / CIP 104966 / NBRC 100827 / IM2)).